We begin with the raw amino-acid sequence, 377 residues long: Succinyl-diaminopimelate desuccinylase (377 aa).

His-66 serves as a coordination point for Zn(2+). The active site involves Asp-68. Asp-99 contacts Zn(2+). Residue Glu-133 is the Proton acceptor of the active site. The Zn(2+) site is built by Glu-134, Glu-163, and His-349.

The protein belongs to the peptidase M20A family. DapE subfamily. In terms of assembly, homodimer. Requires Zn(2+) as cofactor. The cofactor is Co(2+).

The enzyme catalyses N-succinyl-(2S,6S)-2,6-diaminopimelate + H2O = (2S,6S)-2,6-diaminopimelate + succinate. It participates in amino-acid biosynthesis; L-lysine biosynthesis via DAP pathway; LL-2,6-diaminopimelate from (S)-tetrahydrodipicolinate (succinylase route): step 3/3. Its function is as follows. Catalyzes the hydrolysis of N-succinyl-L,L-diaminopimelic acid (SDAP), forming succinate and LL-2,6-diaminopimelate (DAP), an intermediate involved in the bacterial biosynthesis of lysine and meso-diaminopimelic acid, an essential component of bacterial cell walls. The chain is Succinyl-diaminopimelate desuccinylase from Legionella pneumophila (strain Paris).